A 516-amino-acid polypeptide reads, in one-letter code: HMG box-containing protein 1 (516 aa).

The segment at 150-182 (ARPPPVSSSSKSGPAFPHDHWKEETPVRHERAN) is disordered. The span at 156 to 165 (SSSSKSGPAF) shows a compositional bias: low complexity. Positions 166 to 182 (PHDHWKEETPVRHERAN) are enriched in basic and acidic residues. The 143-residue stretch at 203-345 (WCNSWPSTIW…PPGHPDAINF (143 aa)) folds into the AXH domain. The HMG box DNA-binding region spans 436–504 (CKRPMNAFML…EQKRLNPDCW (69 aa)).

In terms of assembly, binds TCF4. Binds RB1. Binds the second PAH repeat of SIN3A. In terms of processing, ubiquitinated by the CTLH E3 ubiquitin-protein ligase complex, leading to subsequent proteasomal degradation.

The protein localises to the nucleus. Its function is as follows. Transcriptional repressor that binds to the promoter region of target genes. Plays a role in the regulation of the cell cycle and of the Wnt pathway. Binds preferentially to the sequence 5'-TTCATTCATTCA-3'. Binding to the histone H1.0 promoter is enhanced by interaction with RB1. Disrupts the interaction between DNA and TCF4. This Mus musculus (Mouse) protein is HMG box-containing protein 1 (Hbp1).